A 99-amino-acid polypeptide reads, in one-letter code: MDLIGFGYAALVTIGSVLGYKRRGGVPSLIAGLSVGLLAGYGAYRVSNDRRDVKVSLFTAFFLATIMGVRFKRSKKVMPAGLVAGLSLMMILRLVLLLL.

Transmembrane regions (helical) follow at residues 1 to 21, 24 to 44, and 79 to 99; these read MDLIGFGYAALVTIGSVLGYK, GGVPSLIAGLSVGLLAGYGAY, and PAGLVAGLSLMMILRLVLLLL.

Belongs to the TMEM14 family.

The protein resides in the mitochondrion membrane. Its subcellular location is the endoplasmic reticulum membrane. Inhibits apoptosis via negative regulation of the mitochondrial outer membrane permeabilization involved in apoptotic signaling pathway. The chain is Transmembrane protein 14A (Tmem14a) from Mus musculus (Mouse).